A 202-amino-acid polypeptide reads, in one-letter code: MTAESTRKASIERSTKETSIAVSVDLDGVGKFDITTGVGFFDHMLEQLSRHSLIDMRVMAKGDLHIDDHHTVEDTGIALGQAIAKALGERRGIVRYASMDLAMDDTLTGAAVDVSGRAFLVWNVNFTTSKIGTFDTELVREFFQAFAMNAGITLHINNHYGANNHHIAESIFKAVARVLRTALETDPRQKDAIPSTKGSLKG.

This sequence belongs to the imidazoleglycerol-phosphate dehydratase family.

It is found in the cytoplasm. The enzyme catalyses D-erythro-1-(imidazol-4-yl)glycerol 3-phosphate = 3-(imidazol-4-yl)-2-oxopropyl phosphate + H2O. The protein operates within amino-acid biosynthesis; L-histidine biosynthesis; L-histidine from 5-phospho-alpha-D-ribose 1-diphosphate: step 6/9. In Brucella anthropi (strain ATCC 49188 / DSM 6882 / CCUG 24695 / JCM 21032 / LMG 3331 / NBRC 15819 / NCTC 12168 / Alc 37) (Ochrobactrum anthropi), this protein is Imidazoleglycerol-phosphate dehydratase.